Here is a 1028-residue protein sequence, read N- to C-terminus: Kinesin-like protein KIF28 (1028 aa).

A Kinesin motor domain is found at 11–358; the sequence is SVRVAVRVRP…LRYAERAKKV (348 aa). 114-121 lines the ATP pocket; it reads GQTGSGKS. The region spanning 460–523 is the FHA domain; sequence CDVGRAASNA…LQHLDRIILG (64 aa). A coiled-coil region spans residues 873 to 902; sequence NQVPELYQKLLKLEQETELLRDVNRALRGE.

This sequence belongs to the TRAFAC class myosin-kinesin ATPase superfamily. Kinesin family.

Its subcellular location is the mitochondrion membrane. In terms of biological role, microtubule-dependent motor protein required for mitochondrion morphology and transport of mitochondria in neuronal cells. The polypeptide is Kinesin-like protein KIF28 (Mus musculus (Mouse)).